A 616-amino-acid chain; its full sequence is MPKYRSHTTTHGRNMAGARALWRATGMTDDDFGKPIIAVVNSFTQFVPGHVHLRDLGKLVAEQIVASGGVAKEFNTIAVDDGIAMGHGGMLYSLPSRELIADSVEYMVNAHCADAMVCISNCDKITPGMLMASLRLNIPVIFVSGGPMEAGKTKLSDKIIKLDLIDAMIQGANPNVSDEESAQIERSACPTCGSCSGMFTANSMNCLNEALGLALPGNGSLLATHADRKQLFLDAGKYIVALTKRYYEQDDVSALPRNIANKAAFENAMILDIAMGGSTNTVLHLLAAAQEGEIDFSMTDIDRLSRKVPHLCKVAPSTQKYHMEDVHRAGGVIGILGELDRAGLLNRDVSNVLGLNLTQTLEAYDVMLTQDEGVKQMYAAGPAGIRTTKAFSQDCRYPSLDTDREEGCIRTREHAYSQDGGLAVLYGNIAADGCIVKTAGVDKDSLTFRGPAKVFESQDEAVEAILGGKVVAGDVVVIRYEGPKGGPGMQEMLYPTTYLKSMGLGKSCALLTDGRFSGGTSGLSIGHVSPEAASGGLIGLVQDGDFINIDIPNRGIVLDVSEAELAARRETEEAHGDAAWSPKGRERQVSYALRAYAMLATSADKGAVRDKSKLGG.

Asp81 is a Mg(2+) binding site. Cys122 lines the [2Fe-2S] cluster pocket. Mg(2+)-binding residues include Asp123 and Lys124. N6-carboxylysine is present on Lys124. Cys195 provides a ligand contact to [2Fe-2S] cluster. Mg(2+) is bound at residue Glu491. Ser517 (proton acceptor) is an active-site residue.

Belongs to the IlvD/Edd family. Homodimer. [2Fe-2S] cluster serves as cofactor. Mg(2+) is required as a cofactor.

The catalysed reaction is (2R)-2,3-dihydroxy-3-methylbutanoate = 3-methyl-2-oxobutanoate + H2O. It catalyses the reaction (2R,3R)-2,3-dihydroxy-3-methylpentanoate = (S)-3-methyl-2-oxopentanoate + H2O. It participates in amino-acid biosynthesis; L-isoleucine biosynthesis; L-isoleucine from 2-oxobutanoate: step 3/4. It functions in the pathway amino-acid biosynthesis; L-valine biosynthesis; L-valine from pyruvate: step 3/4. Its function is as follows. Functions in the biosynthesis of branched-chain amino acids. Catalyzes the dehydration of (2R,3R)-2,3-dihydroxy-3-methylpentanoate (2,3-dihydroxy-3-methylvalerate) into 2-oxo-3-methylpentanoate (2-oxo-3-methylvalerate) and of (2R)-2,3-dihydroxy-3-methylbutanoate (2,3-dihydroxyisovalerate) into 2-oxo-3-methylbutanoate (2-oxoisovalerate), the penultimate precursor to L-isoleucine and L-valine, respectively. The polypeptide is Dihydroxy-acid dehydratase (Yersinia pseudotuberculosis serotype I (strain IP32953)).